Reading from the N-terminus, the 23-residue chain is Ocellatin-LB2 (23 aa).

Asn23 bears the Asparagine amide mark.

As to expression, expressed by the skin glands.

Its subcellular location is the secreted. Its function is as follows. Antibacterial peptide that inhibits the Gram-negative bacterium A.actinomycetemcomitans ATCC 29522 (MIC=210 uM). No activity against the bacteria E.coli ATCC 25922 and S.aureus ATCC 25923, or the fungi C.albicans ATCC 18804 and C.lusitaniae ATCC 56936. Does not show hemolytic activity towards rabbit erythrocytes. The protein is Ocellatin-LB2 of Leptodactylus labyrinthicus (Labyrinth frog).